The primary structure comprises 122 residues: Large ribosomal subunit protein uL18 (122 aa).

The span at 1–19 (MTKLSRKLQTQKRHRRLRR) shows a compositional bias: basic residues. A disordered region spans residues 1–21 (MTKLSRKLQTQKRHRRLRRSV).

This sequence belongs to the universal ribosomal protein uL18 family. In terms of assembly, part of the 50S ribosomal subunit; part of the 5S rRNA/L5/L18/L25 subcomplex. Contacts the 5S and 23S rRNAs.

Functionally, this is one of the proteins that bind and probably mediate the attachment of the 5S RNA into the large ribosomal subunit, where it forms part of the central protuberance. The protein is Large ribosomal subunit protein uL18 of Prochlorococcus marinus (strain MIT 9312).